The primary structure comprises 78 residues: RNA-binding protein KhpA (78 aa).

The KH domain occupies 29–78 (TIIYELTVAKGDIGKIIGKEGRTIKAIRTLLVSVASRDNVKVSLEIMEER).

This sequence belongs to the KhpA RNA-binding protein family.

The protein resides in the cytoplasm. Functionally, a probable RNA-binding protein. The polypeptide is RNA-binding protein KhpA (Chlamydia muridarum (strain MoPn / Nigg)).